The following is a 264-amino-acid chain: Glutamate racemase (264 aa).

Residues D10–S11 and Y42–G43 contribute to the substrate site. The active-site Proton donor/acceptor is the C73. N74 to T75 is a substrate binding site. The active-site Proton donor/acceptor is C183. T184–H185 lines the substrate pocket.

Belongs to the aspartate/glutamate racemases family.

It catalyses the reaction L-glutamate = D-glutamate. It functions in the pathway cell wall biogenesis; peptidoglycan biosynthesis. Functionally, provides the (R)-glutamate required for cell wall biosynthesis. The chain is Glutamate racemase from Streptococcus agalactiae serotype III (strain NEM316).